Reading from the N-terminus, the 880-residue chain is Leucine--tRNA ligase (880 aa).

Positions 46-56 match the 'HIGH' region motif; that stretch reads PYPSGALHMGH. The 'KMSKS' region motif lies at 638-642; that stretch reads KMSKS. Residue Lys-641 coordinates ATP.

This sequence belongs to the class-I aminoacyl-tRNA synthetase family.

The protein resides in the cytoplasm. It catalyses the reaction tRNA(Leu) + L-leucine + ATP = L-leucyl-tRNA(Leu) + AMP + diphosphate. The polypeptide is Leucine--tRNA ligase (Xanthomonas euvesicatoria pv. vesicatoria (strain 85-10) (Xanthomonas campestris pv. vesicatoria)).